The primary structure comprises 222 residues: uncharacterized protein (222 aa).

Positions 1–27 (MSFTRRKFVLGMGTVIFFTGSASSLLA) form a signal peptide, tat-type signal. 3 consecutive 4Fe-4S ferredoxin-type domains span residues 37–66 (YAMIHDESRCNGCNICARACRKTNHAPAQG), 83–114 (TQYHFFRQSCQHCEDAPCIDVCPTGASWRDEQ), and 115–144 (GIVRVEKSQCIGCSYCIGACPYQVRYLNPV). Residues cysteine 46, cysteine 49, cysteine 52, cysteine 56, cysteine 92, cysteine 95, cysteine 100, cysteine 104, cysteine 124, cysteine 127, cysteine 130, cysteine 134, cysteine 151, cysteine 154, cysteine 167, and cysteine 171 each contribute to the [4Fe-4S] cluster site.

In terms of processing, predicted to be exported by the Tat system. The position of the signal peptide cleavage has not been experimentally proven.

This is an uncharacterized protein from Escherichia coli O157:H7.